Consider the following 172-residue polypeptide: ATP synthase subunit b (172 aa).

Residues 12–32 form a helical membrane-spanning segment; the sequence is VGFNAGTMLFQLVAMLILLAL.

This sequence belongs to the ATPase B chain family. As to quaternary structure, F-type ATPases have 2 components, F(1) - the catalytic core - and F(0) - the membrane proton channel. F(1) has five subunits: alpha(3), beta(3), gamma(1), delta(1), epsilon(1). F(0) has three main subunits: a(1), b(2) and c(10-14). The alpha and beta chains form an alternating ring which encloses part of the gamma chain. F(1) is attached to F(0) by a central stalk formed by the gamma and epsilon chains, while a peripheral stalk is formed by the delta and b chains.

It is found in the cell membrane. Functionally, f(1)F(0) ATP synthase produces ATP from ADP in the presence of a proton or sodium gradient. F-type ATPases consist of two structural domains, F(1) containing the extramembraneous catalytic core and F(0) containing the membrane proton channel, linked together by a central stalk and a peripheral stalk. During catalysis, ATP synthesis in the catalytic domain of F(1) is coupled via a rotary mechanism of the central stalk subunits to proton translocation. Component of the F(0) channel, it forms part of the peripheral stalk, linking F(1) to F(0). In Bacillus licheniformis (strain ATCC 14580 / DSM 13 / JCM 2505 / CCUG 7422 / NBRC 12200 / NCIMB 9375 / NCTC 10341 / NRRL NRS-1264 / Gibson 46), this protein is ATP synthase subunit b.